Reading from the N-terminus, the 397-residue chain is Tryptophan synthase beta chain 1 (397 aa).

Lysine 94 bears the N6-(pyridoxal phosphate)lysine mark.

It belongs to the TrpB family. In terms of assembly, tetramer of two alpha and two beta chains. Pyridoxal 5'-phosphate serves as cofactor.

It catalyses the reaction (1S,2R)-1-C-(indol-3-yl)glycerol 3-phosphate + L-serine = D-glyceraldehyde 3-phosphate + L-tryptophan + H2O. Its pathway is amino-acid biosynthesis; L-tryptophan biosynthesis; L-tryptophan from chorismate: step 5/5. The beta subunit is responsible for the synthesis of L-tryptophan from indole and L-serine. This Archaeoglobus fulgidus (strain ATCC 49558 / DSM 4304 / JCM 9628 / NBRC 100126 / VC-16) protein is Tryptophan synthase beta chain 1 (trpB1).